Reading from the N-terminus, the 263-residue chain is Putative TATA-binding protein pB263R (263 aa).

It belongs to the asfivirus B263R family.

Putative TATA-binding protein. The chain is Putative TATA-binding protein pB263R from African swine fever virus (isolate Warthog/Namibia/Wart80/1980) (ASFV).